The following is a 556-amino-acid chain: Phenylalanine--tRNA ligase beta subunit (556 aa).

Positions 269–345 constitute a B5 domain; sequence MEPEEVVYDV…MGYGYERIEP (77 aa). Mg(2+) contacts are provided by Asp323, Asp329, Glu332, and Glu333.

Belongs to the phenylalanyl-tRNA synthetase beta subunit family. Type 2 subfamily. Tetramer of two alpha and two beta subunits. Requires Mg(2+) as cofactor.

It is found in the cytoplasm. It catalyses the reaction tRNA(Phe) + L-phenylalanine + ATP = L-phenylalanyl-tRNA(Phe) + AMP + diphosphate + H(+). The chain is Phenylalanine--tRNA ligase beta subunit from Thermofilum pendens (strain DSM 2475 / Hrk 5).